A 307-amino-acid chain; its full sequence is 4-hydroxy-3-methylbut-2-enyl diphosphate reductase (307 aa).

[4Fe-4S] cluster is bound at residue C13. H42 and H75 together coordinate (2E)-4-hydroxy-3-methylbut-2-enyl diphosphate. H42 and H75 together coordinate dimethylallyl diphosphate. Positions 42 and 75 each coordinate isopentenyl diphosphate. [4Fe-4S] cluster is bound at residue C97. (2E)-4-hydroxy-3-methylbut-2-enyl diphosphate is bound at residue H125. Residue H125 coordinates dimethylallyl diphosphate. H125 is a binding site for isopentenyl diphosphate. E127 serves as the catalytic Proton donor. (2E)-4-hydroxy-3-methylbut-2-enyl diphosphate is bound at residue T165. C195 provides a ligand contact to [4Fe-4S] cluster. Positions 223, 224, 225, and 267 each coordinate (2E)-4-hydroxy-3-methylbut-2-enyl diphosphate. Residues S223, S224, N225, and S267 each coordinate dimethylallyl diphosphate. 4 residues coordinate isopentenyl diphosphate: S223, S224, N225, and S267.

The protein belongs to the IspH family. [4Fe-4S] cluster serves as cofactor.

It carries out the reaction isopentenyl diphosphate + 2 oxidized [2Fe-2S]-[ferredoxin] + H2O = (2E)-4-hydroxy-3-methylbut-2-enyl diphosphate + 2 reduced [2Fe-2S]-[ferredoxin] + 2 H(+). The enzyme catalyses dimethylallyl diphosphate + 2 oxidized [2Fe-2S]-[ferredoxin] + H2O = (2E)-4-hydroxy-3-methylbut-2-enyl diphosphate + 2 reduced [2Fe-2S]-[ferredoxin] + 2 H(+). It functions in the pathway isoprenoid biosynthesis; dimethylallyl diphosphate biosynthesis; dimethylallyl diphosphate from (2E)-4-hydroxy-3-methylbutenyl diphosphate: step 1/1. Its pathway is isoprenoid biosynthesis; isopentenyl diphosphate biosynthesis via DXP pathway; isopentenyl diphosphate from 1-deoxy-D-xylulose 5-phosphate: step 6/6. In terms of biological role, catalyzes the conversion of 1-hydroxy-2-methyl-2-(E)-butenyl 4-diphosphate (HMBPP) into a mixture of isopentenyl diphosphate (IPP) and dimethylallyl diphosphate (DMAPP). Acts in the terminal step of the DOXP/MEP pathway for isoprenoid precursor biosynthesis. The polypeptide is 4-hydroxy-3-methylbut-2-enyl diphosphate reductase (Chlamydia trachomatis serovar L2 (strain ATCC VR-902B / DSM 19102 / 434/Bu)).